Here is a 44-residue protein sequence, read N- to C-terminus: Photosystem I reaction center subunit IX (44 aa).

The helical transmembrane segment at tyrosine 7 to isoleucine 27 threads the bilayer.

This sequence belongs to the PsaJ family.

It localises to the plastid. Its subcellular location is the chloroplast thylakoid membrane. May help in the organization of the PsaE and PsaF subunits. This Phalaenopsis aphrodite subsp. formosana (Moth orchid) protein is Photosystem I reaction center subunit IX.